Reading from the N-terminus, the 105-residue chain is Large ribosomal subunit protein uL24 (105 aa).

It belongs to the universal ribosomal protein uL24 family. Part of the 50S ribosomal subunit.

In terms of biological role, one of two assembly initiator proteins, it binds directly to the 5'-end of the 23S rRNA, where it nucleates assembly of the 50S subunit. Its function is as follows. One of the proteins that surrounds the polypeptide exit tunnel on the outside of the subunit. The sequence is that of Large ribosomal subunit protein uL24 from Mycolicibacterium smegmatis (strain ATCC 700084 / mc(2)155) (Mycobacterium smegmatis).